We begin with the raw amino-acid sequence, 171 residues long: Adenine phosphoribosyltransferase (171 aa).

Belongs to the purine/pyrimidine phosphoribosyltransferase family. Homodimer.

It is found in the cytoplasm. It catalyses the reaction AMP + diphosphate = 5-phospho-alpha-D-ribose 1-diphosphate + adenine. Its pathway is purine metabolism; AMP biosynthesis via salvage pathway; AMP from adenine: step 1/1. In terms of biological role, catalyzes a salvage reaction resulting in the formation of AMP, that is energically less costly than de novo synthesis. The sequence is that of Adenine phosphoribosyltransferase from Synechococcus sp. (strain ATCC 27144 / PCC 6301 / SAUG 1402/1) (Anacystis nidulans).